The chain runs to 37 residues: Large ribosomal subunit protein bL36 (37 aa).

Belongs to the bacterial ribosomal protein bL36 family.

In Idiomarina loihiensis (strain ATCC BAA-735 / DSM 15497 / L2-TR), this protein is Large ribosomal subunit protein bL36.